The sequence spans 189 residues: Elongation factor P (189 aa).

Position 35 is an N6-(3,6-diaminohexanoyl)-5-hydroxylysine (K35).

Belongs to the elongation factor P family. In terms of processing, may be beta-lysylated on the epsilon-amino group of Lys-35 by the combined action of EpmA and EpmB, and then hydroxylated on the C5 position of the same residue by EpmC (if this protein is present). Lysylation is critical for the stimulatory effect of EF-P on peptide-bond formation. The lysylation moiety may extend toward the peptidyltransferase center and stabilize the terminal 3-CCA end of the tRNA. Hydroxylation of the C5 position on Lys-35 may allow additional potential stabilizing hydrogen-bond interactions with the P-tRNA.

It is found in the cytoplasm. The protein operates within protein biosynthesis; polypeptide chain elongation. In terms of biological role, involved in peptide bond synthesis. Alleviates ribosome stalling that occurs when 3 or more consecutive Pro residues or the sequence PPG is present in a protein, possibly by augmenting the peptidyl transferase activity of the ribosome. Modification of Lys-35 is required for alleviation. In Wigglesworthia glossinidia brevipalpis, this protein is Elongation factor P.